The sequence spans 639 residues: Mediator of RNA polymerase II transcription subunit 17 (639 aa).

The stretch at 160–187 (RLQNFNAAADKLLKSASRLENEVASETR) forms a coiled coil.

It belongs to the Mediator complex subunit 17 family. In terms of assembly, component of the Mediator complex.

Its subcellular location is the nucleus. Its function is as follows. Component of the Mediator complex, a coactivator involved in the regulated transcription of nearly all RNA polymerase II-dependent genes. Mediator functions as a bridge to convey information from gene-specific regulatory proteins to the basal RNA polymerase II transcription machinery. Mediator is recruited to promoters by direct interactions with regulatory proteins and serves as a scaffold for the assembly of a functional preinitiation complex with RNA polymerase II and the general transcription factors. The chain is Mediator of RNA polymerase II transcription subunit 17 (srb4) from Neosartorya fischeri (strain ATCC 1020 / DSM 3700 / CBS 544.65 / FGSC A1164 / JCM 1740 / NRRL 181 / WB 181) (Aspergillus fischerianus).